We begin with the raw amino-acid sequence, 312 residues long: Nucleosome assembly protein 1-like 4 (312 aa).

Positions 24–78 (VETLKNKLQALAEQHVDVLESLAPSVRKRVDVLMEIQSQHDELEVKFFEEKAALE) form a coiled coil. Residues 45-60 (LAPSVRKRVDVLMEIQ) carry the Nuclear export signal motif. Residues 289 to 312 (DYGASWVDDEEEDDNNDEYSDEEA) are disordered.

Belongs to the nucleosome assembly protein (NAP) family.

It localises to the nucleus. Its subcellular location is the cytoplasm. Its function is as follows. May modulate chromatin structure by regulation of nucleosome assembly/disassembly. The protein is Nucleosome assembly protein 1-like 4 of Oryza sativa subsp. japonica (Rice).